The following is a 216-amino-acid chain: Somatotropin (216 aa).

The signal sequence occupies residues 1-26 (MAADSQTPWLLTFSLLCLLWPQEAGA). Residue His45 participates in Zn(2+) binding. Residues Cys78 and Cys189 are joined by a disulfide bond. Ser131 carries the phosphoserine modification. Position 198 (Glu198) interacts with Zn(2+). Residues Cys206 and Cys214 are joined by a disulfide bond.

Belongs to the somatotropin/prolactin family.

It is found in the secreted. Plays an important role in growth control. Its major role in stimulating body growth is to stimulate the liver and other tissues to secrete IGF1. It stimulates both the differentiation and proliferation of myoblasts. It also stimulates amino acid uptake and protein synthesis in muscle and other tissues. This chain is Somatotropin (Gh1), found in Rattus norvegicus (Rat).